A 341-amino-acid chain; its full sequence is Krueppel-like factor 17 (341 aa).

Residues 214 to 252 (VTESNTQEEPFVREPPTPAPEGAESPSTSRGATRRQSPV) are disordered. Polar residues predominate over residues 238–252 (SPSTSRGATRRQSPV). 3 C2H2-type zinc fingers span residues 256-280 (YVCT…QRKH), 286-310 (FACD…KRIH), and 316-338 (HKCD…KRTH).

The protein belongs to the Sp1 C2H2-type zinc-finger protein family. Exclusively expressed in testis and ovary. Localized to step 3-8 spermatids in testis and growing oocytes in ovary.

The protein localises to the nucleus. Its function is as follows. Transcription repressor that binds to the promoter of target genes and prevents their expression. Acts as a negative regulator of epithelial-mesenchymal transition and metastasis in breast cancer. Specifically binds the 5'-CACCC-3' sequence in the promoter of ID1, a key metastasis regulator in breast cancer, and repress its expression. May be a germ cell-specific transcription factor that plays important roles in spermatid differentiation and oocyte development. This chain is Krueppel-like factor 17 (Klf17), found in Mus musculus (Mouse).